The chain runs to 168 residues: Auxin-responsive protein IAA1 (168 aa).

Residues 1-74 (MEVTNGLNLK…NRKNNNNKNV (74 aa)) form a disordered region. The EAR-like (transcriptional repression) motif lies at 14–18 (LRLGL). Polar residues predominate over residues 23-34 (EEQQLELSCVRS). One can recognise a PB1 domain in the interval 74 to 161 (VSYVKVSMDG…SCQKLRIMKG (88 aa)).

This sequence belongs to the Aux/IAA family. In terms of assembly, homodimers and heterodimers. Interacts with the auxin-responsive protein IAA2. Interacts with TPL. Phosphorylated by phytochrome A in vitro. Preferentially expressed in stems, leaves and flowers.

It localises to the nucleus. Functionally, aux/IAA proteins are short-lived transcriptional factors that function as repressors of early auxin response genes at low auxin concentrations. Repression is thought to result from the interaction with auxin response factors (ARFs), proteins that bind to the auxin-responsive promoter element (AuxRE). Formation of heterodimers with ARF proteins may alter their ability to modulate early auxin response genes expression. The polypeptide is Auxin-responsive protein IAA1 (IAA1) (Arabidopsis thaliana (Mouse-ear cress)).